A 623-amino-acid polypeptide reads, in one-letter code: Quinoprotein ethanol dehydrogenase (623 aa).

The N-terminal stretch at 1 to 34 (MTIRSLPAALSPLSMAVQAVLLVSSLALAPAANA) is a signal peptide. The Ca(2+) site is built by D45 and N51. Residue E95 participates in pyrroloquinoline quinone binding. C139 and C140 are disulfide-bonded. Pyrroloquinoline quinone is bound by residues R145, T189, and 207-209 (HGS). A Ca(2+)-binding site is contributed by E213. Positions 242-279 (GRLNGKDSTPTGDVKAPSWPDDPTTETGKVESWSHGGG) are disordered. Ca(2+)-binding residues include N300 and D350. D350 (proton acceptor) is an active-site residue. R378 serves as a coordination point for pyrroloquinoline quinone. The interval 414–436 (RPVENEGQRPAKPLPGETKGKPV) is disordered. WD repeat units lie at residues 515-556 (EHNE…ELWK) and 559-601 (TGSG…LTKP). Positions 523 and 587 each coordinate pyrroloquinoline quinone.

It belongs to the bacterial PQQ dehydrogenase family. As to quaternary structure, homodimer. Pyrroloquinoline quinone is required as a cofactor. The cofactor is Ca(2+).

Its subcellular location is the periplasm. It catalyses the reaction a primary alcohol + 2 Fe(III)-[cytochrome c] = an aldehyde + 2 Fe(II)-[cytochrome c] + 2 H(+). It carries out the reaction ethanol + 2 Fe(III)-[cytochrome c] = acetaldehyde + 2 Fe(II)-[cytochrome c] + 2 H(+). The enzyme catalyses ethanol + A = acetaldehyde + AH2. The catalysed reaction is 1-propanol + 2 Fe(III)-[cytochrome c] = propanal + 2 Fe(II)-[cytochrome c] + 2 H(+). Its pathway is alcohol metabolism; ethanol degradation; acetate from ethanol: step 1/2. With respect to regulation, enhanced by the presence of ethylamine or NH4(+) ions. Functionally, catalyzes the oxidation of ethanol and other primary alcohols to the corresponding aldehydes, except methanol, which is not a substrate. Uses a specific inducible cytochrome c550, encoded by the adjacent gene in the locus, as electron acceptor. Is a key enzyme of the carbon and energy metabolism during growth of P.putida on ethanol as the sole carbon and energy source. Displays lower activity on secondary alcohols, aldehydes and diols. Is not active with sugar alcohols such as glycerol and D-sorbitol. In vitro, reacts well with phenazine methosulfate (PMS) as an electron acceptor but not with NAD(P), potassium ferricyanide, or molecular oxygen. The sequence is that of Quinoprotein ethanol dehydrogenase from Pseudomonas putida (Arthrobacter siderocapsulatus).